The following is a 237-amino-acid chain: MRPSRRAPDELRAVSLERGVVKYAEGSCLVKFGDTHVLVTATLEERLPPWLKGQGRGWVTAEYGMLPRATLERTRREASAGKQGGRTVEIQRLIGRSLRAAVDLEALGERQITIDCDVIQADGGTRTASITGAWVALADCVNWMKARNMLKAGVLRGNVAAISCGIYNGTPVLDLDYAEDSEADTDANFVMTGEGRIIEVQGTAEKVPFSDDEFLALMALAKKGVARLVDLQKMAVA.

Phosphate-binding positions include R86 and G124–R126.

It belongs to the RNase PH family. Homohexameric ring arranged as a trimer of dimers.

The enzyme catalyses tRNA(n+1) + phosphate = tRNA(n) + a ribonucleoside 5'-diphosphate. In terms of biological role, phosphorolytic 3'-5' exoribonuclease that plays an important role in tRNA 3'-end maturation. Removes nucleotide residues following the 3'-CCA terminus of tRNAs; can also add nucleotides to the ends of RNA molecules by using nucleoside diphosphates as substrates, but this may not be physiologically important. Probably plays a role in initiation of 16S rRNA degradation (leading to ribosome degradation) during starvation. This chain is Ribonuclease PH, found in Nitrobacter winogradskyi (strain ATCC 25391 / DSM 10237 / CIP 104748 / NCIMB 11846 / Nb-255).